The following is a 391-amino-acid chain: Phosphoglycerate kinase (391 aa).

Substrate-binding positions include 21 to 23 (DLN), Arg36, 59 to 62 (HLGR), Arg113, and Arg146. Residues Lys197, Glu319, and 345 to 348 (GGDT) contribute to the ATP site.

Belongs to the phosphoglycerate kinase family. As to quaternary structure, monomer.

The protein localises to the cytoplasm. The catalysed reaction is (2R)-3-phosphoglycerate + ATP = (2R)-3-phospho-glyceroyl phosphate + ADP. It functions in the pathway carbohydrate degradation; glycolysis; pyruvate from D-glyceraldehyde 3-phosphate: step 2/5. The polypeptide is Phosphoglycerate kinase (Shewanella baltica (strain OS223)).